The sequence spans 154 residues: Keratin-associated protein 9-9 (154 aa).

14 tandem repeats follow at residues 8–12, 13–17, 18–22, 37–41, 42–46, 51–55, 56–60, 61–65, 66–70, 75–79, 124–128, 129–133, 134–137, and 148–152. The tract at residues 8-152 is 14 X 5 AA repeats of C-C-[RQVGE]-[SPSTNQ]-[TASL]; that stretch reads CCQPTCCRTT…TCVSSCCQPS (145 aa).

It belongs to the KRTAP type 9 family. Interacts with hair keratins.

In the hair cortex, hair keratin intermediate filaments are embedded in an interfilamentous matrix, consisting of hair keratin-associated proteins (KRTAP), which are essential for the formation of a rigid and resistant hair shaft through their extensive disulfide bond cross-linking with abundant cysteine residues of hair keratins. The matrix proteins include the high-sulfur and high-glycine-tyrosine keratins. The chain is Keratin-associated protein 9-9 (KRTAP9-9) from Homo sapiens (Human).